The primary structure comprises 56 residues: ComX pheromone (56 aa).

The propeptide occupies 1 to 50; the sequence is MMQDLINYFLSYPEVLKKLKNREACLIGFSSNETETIIKAYNDYHLSSPT. A Tryptophan derivative modification is found at tryptophan 54. Residue tryptophan 54 is the site of 3'-farnesyl-2',N2-cyclotryptophan attachment.

In terms of assembly, interacts directly with the sensor histidine kinase ComP and stimulates its activity. In terms of processing, trp-54 is modified by farnesylation, which is essential for activity. Modified by the tryptophan prenyltransferase ComQ before export to the extracellular environment. The type of isoprenyl derivative differs among the different pherotypes and depends on ComX primary sequence.

It localises to the secreted. In terms of biological role, part of a major quorum-sensing system that regulates the development of genetic competence. Acts through the activation of the two-component regulatory system ComP/ComA composed of a sensor histidine kinase, ComP, and a response regulator, ComA. The protein is ComX pheromone of Bacillus mojavensis.